Here is a 74-residue protein sequence, read N- to C-terminus: ATP synthase subunit c (74 aa).

A run of 2 helical transmembrane segments spans residues 13–33 and 51–71; these read ISVI…ASLI and ILGF…AFLI.

It belongs to the ATPase C chain family. In terms of assembly, F-type ATPases have 2 components, F(1) - the catalytic core - and F(0) - the membrane proton channel. F(1) has five subunits: alpha(3), beta(3), gamma(1), delta(1), epsilon(1). F(0) has three main subunits: a(1), b(2) and c(10-14). The alpha and beta chains form an alternating ring which encloses part of the gamma chain. F(1) is attached to F(0) by a central stalk formed by the gamma and epsilon chains, while a peripheral stalk is formed by the delta and b chains.

The protein resides in the cell inner membrane. Functionally, f(1)F(0) ATP synthase produces ATP from ADP in the presence of a proton or sodium gradient. F-type ATPases consist of two structural domains, F(1) containing the extramembraneous catalytic core and F(0) containing the membrane proton channel, linked together by a central stalk and a peripheral stalk. During catalysis, ATP synthesis in the catalytic domain of F(1) is coupled via a rotary mechanism of the central stalk subunits to proton translocation. In terms of biological role, key component of the F(0) channel; it plays a direct role in translocation across the membrane. A homomeric c-ring of between 10-14 subunits forms the central stalk rotor element with the F(1) delta and epsilon subunits. The sequence is that of ATP synthase subunit c from Granulibacter bethesdensis (strain ATCC BAA-1260 / CGDNIH1).